A 186-amino-acid chain; its full sequence is Lipid A palmitoyltransferase PagP (186 aa).

Residues 1–25 form the signal peptide; it reads MNVSKYVAIFFFVFIQLISVGKVFA. Active-site residues include His58, Asp101, and Ser102.

Belongs to the lipid A palmitoyltransferase family. Homodimer.

It localises to the cell outer membrane. The enzyme catalyses lipid A (E. coli) + a 1-hexadecanoyl-2-acyl-sn-glycero-3-phosphocholine = hepta-acyl lipid A (E. coli) + a 2-acyl-sn-glycero-3-phosphocholine. The catalysed reaction is lipid IIA + a 1-hexadecanoyl-2-acyl-sn-glycero-3-phosphocholine = lipid IIB + a 2-acyl-sn-glycero-3-phosphocholine. It carries out the reaction lipid IVA (E. coli) + a 1-hexadecanoyl-2-acyl-sn-glycero-3-phosphocholine = lipid IVB (E. coli) + a 2-acyl-sn-glycero-3-phosphocholine. In terms of biological role, transfers a palmitate residue from the sn-1 position of a phospholipid to the N-linked hydroxymyristate on the proximal unit of lipid A or its precursors. The polypeptide is Lipid A palmitoyltransferase PagP (Escherichia coli O6:H1 (strain CFT073 / ATCC 700928 / UPEC)).